We begin with the raw amino-acid sequence, 1457 residues long: ABC transporter G family member 36 (1457 aa).

Residues 14–43 are disordered; it reads RLGGSMRGDSGSMWRRGDDVFSRSSREEDD. Residues 28 to 39 are compositionally biased toward basic and acidic residues; the sequence is RRGDDVFSRSSR. The ABC transporter 1 domain occupies 164–437; that stretch reads GNALGILPNR…FESTGFKCPD (274 aa). 197-204 lines the ATP pocket; sequence GPPGSGKT. Residues 515–728 form the ABC transmembrane type-2 1 domain; it reads ELLKANIDRE…AQNAISVNEL (214 aa). 7 helical membrane-spanning segments follow: residues 533-553, 565-585, 621-641, 653-673, 677-697, 706-726, and 765-785; these read FVYM…MTLF, SGGI…FNGF, IPIT…VIGF, LLML…GGAA, IVAN…GGFI, WWIW…ISVN, and IGFG…TLAL. Residues 821–841 form a disordered region; it reads SSGSTRRPMGNGTENDSTIVD. Residues 860–1112 enclose the ABC transporter 2 domain; that stretch reads LSFDNVRYSV…ELIKYFESIP (253 aa). 905–912 provides a ligand contact to ATP; the sequence is GVSGAGKT. The 215-residue stretch at 1185–1399 folds into the ABC transmembrane type-2 2 domain; it reads TQCMACLWKQ…TLYGLVVSQF (215 aa). 7 consecutive transmembrane segments (helical) span residues 1209-1229, 1244-1264, 1292-1312, 1319-1339, 1349-1369, 1380-1400, and 1429-1449; these read FFFT…LGGK, YAAV…VVAV, IPYT…MIGF, FFWY…YGMM, IASI…GFVI, WYCW…SQFG, and WVAT…GFAI.

This sequence belongs to the ABC transporter superfamily. ABCG family. PDR (TC 3.A.1.205) subfamily.

It is found in the membrane. Functionally, may be a general defense protein. The protein is ABC transporter G family member 36 of Oryza sativa subsp. indica (Rice).